Here is an 862-residue protein sequence, read N- to C-terminus: MMKQFLDLKAKHPDAVMLFRCGDFYETYSTDAIIAAEILGITLTKRANGKGKTVEMAGFPHHALDTYLPKLIRAGKRVAICDQLEDPKTTKKLVKRGITELVTPGVSINDNVLNYKENNFLAAVHFGKSACGIAFLDISTGEFLTAEGPFDYVDKLLNNFAPKEILFERGKRGMFEGNFGSKFFTFELDDWVFTESSSREKLLKHFETKNLKGFGVEHLKNGIIASGAILQYLDMTEHTQVGHITSLARIEEDKYVRLDKFTVRSLELIGSMNDGGSSLLHVIDKTISPMGARLLKRWMVFPLKDEKPINDRLNVVEYFFRKPDFRELIEDELHRIGDLERIISKVAVGRVSPREVVQLKVALQAIEPIKEACQQADNPSLNRIGEQLNLCISIRDRIEKEINNDPPLLINKGGVIKDGVDTELDELRQIAYSGKDYLLKIQQRESELTGIPSLKIAYNSVFGYYIEVRNVHKDKVPQEWIRKQTLVNAERYITQELKEYEEKILGAEDKILVLETRLYTELVQALSEFIPAIQINANQIARIDCLLSFANVAKENNYIRPVIEDNDVLDIRQGRHPVIEKQLPIGEKYIANDVLLDNATQQVIIITGPNMAGKSALLRQTALITLLAQIGSFVPAESAHIGLVDKIFTRVGASDNISVGESTFMVEMNEASDILNNISSRSLVLFDELGRGTSTYDGISIAWAIVEYIHEHPKAKARTLFATHYHELNEMEKSFKRIKNYNVSVKEVDNKVIFLRKLERGGSEHSFGIHVAKMAGMPKSIVKRANEILKQLESDNRQQGISGKPLAEVSENRGGMQLSFFQLDDPILCQIRDEILHLDVNNLTPIEALNKLNDIKKIVRGK.

608-615 (GPNMAGKS) serves as a coordination point for ATP.

This sequence belongs to the DNA mismatch repair MutS family.

Its function is as follows. This protein is involved in the repair of mismatches in DNA. It is possible that it carries out the mismatch recognition step. This protein has a weak ATPase activity. This Bacteroides fragilis (strain YCH46) protein is DNA mismatch repair protein MutS.